A 129-amino-acid polypeptide reads, in one-letter code: Small ribosomal subunit protein uS11 (129 aa).

The protein belongs to the universal ribosomal protein uS11 family. Part of the 30S ribosomal subunit. Interacts with proteins S7 and S18. Binds to IF-3.

In terms of biological role, located on the platform of the 30S subunit, it bridges several disparate RNA helices of the 16S rRNA. Forms part of the Shine-Dalgarno cleft in the 70S ribosome. This is Small ribosomal subunit protein uS11 from Bradyrhizobium sp. (strain BTAi1 / ATCC BAA-1182).